A 591-amino-acid polypeptide reads, in one-letter code: UvrABC system protein C (591 aa).

In terms of domain architecture, GIY-YIG spans 14–91 (DSPGCYLHKD…IQKNMPKYNI (78 aa)). In terms of domain architecture, UVR spans 196–231 (DKIVTGLKEKMLAASQAMEFERAAEYRDLISGIATL).

The protein belongs to the UvrC family. Interacts with UvrB in an incision complex.

The protein localises to the cytoplasm. In terms of biological role, the UvrABC repair system catalyzes the recognition and processing of DNA lesions. UvrC both incises the 5' and 3' sides of the lesion. The N-terminal half is responsible for the 3' incision and the C-terminal half is responsible for the 5' incision. This Streptococcus uberis (strain ATCC BAA-854 / 0140J) protein is UvrABC system protein C.